The chain runs to 700 residues: uncharacterized protein (700 aa).

The next 9 helical transmembrane spans lie at 24-44 (VLCLPVAVGLMLGELRFGLLF), 67-87 (LIIGASLFATCSLLTQLLLAK), 89-109 (VPLPFLLTGLTLVLGVTAELG), 115-135 (LLPASLLAAIFTLSLAGYMPV), 139-159 (LLIYALGTLWYGLFNWFWFWI), 383-403 (LMGTALHLPKSYWILMTVLLV), 420-440 (VGTVVGLIIAGVALHFKIPEG), 461-481 (YGWATVGFTITAVYTLQLLWL), and 491-511 (LIDTIIGCLIAFGGTVWLWPQ).

It belongs to the YccS/YhfK family.

The protein resides in the cell membrane. This is an uncharacterized protein from Escherichia coli (strain K12).